The following is a 199-amino-acid chain: Recombination protein RecR (199 aa).

The C4-type zinc finger occupies 56–71 (CATCGNVAQEELCNIC). The 96-residue stretch at 79–174 (SVICVVEEPK…KVTRLASGLP (96 aa)) folds into the Toprim domain.

This sequence belongs to the RecR family.

Its function is as follows. May play a role in DNA repair. It seems to be involved in an RecBC-independent recombinational process of DNA repair. It may act with RecF and RecO. The chain is Recombination protein RecR from Streptomyces avermitilis (strain ATCC 31267 / DSM 46492 / JCM 5070 / NBRC 14893 / NCIMB 12804 / NRRL 8165 / MA-4680).